Consider the following 160-residue polypeptide: Fluoride-specific ion channel FluC (160 aa).

The next 4 helical transmembrane spans lie at 5-25 (LFISYGAILGASLRWAIGLLF), 34-54 (FGTLIANLFGCLIIGVLLGLF), 67-87 (FLITGFLGSLTTFSSFSSEVV), and 99-119 (FCVLMMHLFGCLAMTVLGIWI). G74 and T77 together coordinate Na(+).

This sequence belongs to the fluoride channel Fluc/FEX (TC 1.A.43) family.

It localises to the cell inner membrane. It catalyses the reaction fluoride(in) = fluoride(out). Na(+) is not transported, but it plays an essential structural role and its presence is essential for fluoride channel function. Functionally, fluoride-specific ion channel. Important for reducing fluoride concentration in the cell, thus reducing its toxicity. This is Fluoride-specific ion channel FluC from Haemophilus influenzae (strain ATCC 51907 / DSM 11121 / KW20 / Rd).